The primary structure comprises 418 residues: Glutamyl-tRNA reductase (418 aa).

Substrate is bound by residues 49-52 (TCNR), Ser-109, 114-116 (EPQ), and Gln-120. Residue Cys-50 is the Nucleophile of the active site. 189 to 194 (GAGETI) lines the NADP(+) pocket.

It belongs to the glutamyl-tRNA reductase family. In terms of assembly, homodimer.

The enzyme catalyses (S)-4-amino-5-oxopentanoate + tRNA(Glu) + NADP(+) = L-glutamyl-tRNA(Glu) + NADPH + H(+). The protein operates within porphyrin-containing compound metabolism; protoporphyrin-IX biosynthesis; 5-aminolevulinate from L-glutamyl-tRNA(Glu): step 1/2. Its function is as follows. Catalyzes the NADPH-dependent reduction of glutamyl-tRNA(Glu) to glutamate 1-semialdehyde (GSA). This is Glutamyl-tRNA reductase from Escherichia coli O6:K15:H31 (strain 536 / UPEC).